Reading from the N-terminus, the 557-residue chain is CTP synthase (557 aa).

The interval 1–270 is amidoligase domain; it reads MTKYVFVTGG…DAIICEELKL (270 aa). Serine 13 is a CTP binding site. Serine 13 contacts UTP. ATP is bound by residues 14 to 19 and aspartate 71; that span reads SLGKGI. Residues aspartate 71 and glutamate 144 each contribute to the Mg(2+) site. Residues 151–153, 191–196, and lysine 227 contribute to the CTP site; these read DIE and KTKPTQ. UTP contacts are provided by residues 191 to 196 and lysine 227; that span reads KTKPTQ. A Glutamine amidotransferase type-1 domain is found at 295-547; that stretch reads TIGMVGKYVD…VEAALAHHEA (253 aa). An L-glutamine-binding site is contributed by glycine 356. Cysteine 383 serves as the catalytic Nucleophile; for glutamine hydrolysis. L-glutamine contacts are provided by residues 384–387, glutamate 407, and arginine 473; that span reads LGMQ. Residues histidine 520 and glutamate 522 contribute to the active site.

It belongs to the CTP synthase family. Homotetramer.

It carries out the reaction UTP + L-glutamine + ATP + H2O = CTP + L-glutamate + ADP + phosphate + 2 H(+). The enzyme catalyses L-glutamine + H2O = L-glutamate + NH4(+). The catalysed reaction is UTP + NH4(+) + ATP = CTP + ADP + phosphate + 2 H(+). Its pathway is pyrimidine metabolism; CTP biosynthesis via de novo pathway; CTP from UDP: step 2/2. With respect to regulation, allosterically activated by GTP, when glutamine is the substrate; GTP has no effect on the reaction when ammonia is the substrate. The allosteric effector GTP functions by stabilizing the protein conformation that binds the tetrahedral intermediate(s) formed during glutamine hydrolysis. Inhibited by the product CTP, via allosteric rather than competitive inhibition. Its function is as follows. Catalyzes the ATP-dependent amination of UTP to CTP with either L-glutamine or ammonia as the source of nitrogen. Regulates intracellular CTP levels through interactions with the four ribonucleotide triphosphates. The sequence is that of CTP synthase from Paraburkholderia phytofirmans (strain DSM 17436 / LMG 22146 / PsJN) (Burkholderia phytofirmans).